Consider the following 175-residue polypeptide: Zinc finger protein ZAT18 (175 aa).

2 C2H2-type zinc fingers span residues 49-71 (FECKTCNRKFDSFQALGGHRASH) and 93-115 (HKCTICDQMFGTGQALGGHMRKH). Positions 71–78 (HKKPKLIV) match the Nuclear localization signal motif. The EAR-like (transcriptional repression) signature appears at 146–152 (LDLNLTP).

Mostly expressed in stems, siliques and leaves, and, to a lower extent, in cotyledons, hypocotyls and roots.

The protein localises to the nucleus. Functionally, transcription factor involved in stress responses. Positive regulator of the jasmonic acid (JA)- mediated signaling pathway. Triggers the up-regulation of LOX3, VSP2, PAL1 and PAL2 in a JA-dependent manner. Promotes drought and osmotic stress tolerance by preventing reactive oxygen species (ROS) production (e.g. H(2)O(2)). The protein is Zinc finger protein ZAT18 of Arabidopsis thaliana (Mouse-ear cress).